A 91-amino-acid polypeptide reads, in one-letter code: DNA-binding protein HU (91 aa).

It belongs to the bacterial histone-like protein family.

In terms of biological role, histone-like DNA-binding protein which is capable of wrapping DNA to stabilize it, and thus to prevent its denaturation under extreme environmental conditions. Also seems to act as a fortuitous virulence factor in delayed sequelae by binding to heparan sulfate-proteoglycans in the extracellular matrix of target organs and acting as a nidus for in situ immune complex formation. The protein is DNA-binding protein HU (hup) of Streptococcus mutans serotype c (strain ATCC 700610 / UA159).